A 201-amino-acid polypeptide reads, in one-letter code: Small ribosomal subunit protein uS4 (201 aa).

One can recognise an S4 RNA-binding domain in the interval 91-155 (TRLDNVVYRA…STLPFQVARE (65 aa)).

This sequence belongs to the universal ribosomal protein uS4 family. As to quaternary structure, part of the 30S ribosomal subunit. Contacts protein S5. The interaction surface between S4 and S5 is involved in control of translational fidelity.

Functionally, one of the primary rRNA binding proteins, it binds directly to 16S rRNA where it nucleates assembly of the body of the 30S subunit. In terms of biological role, with S5 and S12 plays an important role in translational accuracy. This is Small ribosomal subunit protein uS4 from Nocardia farcinica (strain IFM 10152).